The chain runs to 288 residues: RELT-like protein 1 (288 aa).

An N-terminal signal peptide occupies residues 1 to 23 (MAPPAASGIPSIAPSLGPTAVWL). Topologically, residues 24–57 (GNRSDLGDVQALASRDLPTTTVTAGNNNKPEHLE) are extracellular. N-linked (GlcNAc...) asparagine glycosylation occurs at Asn-25. The helical transmembrane segment at 58-78 (YVAFVLVPVFFIMGLLGILIC) threads the bilayer. Over 79 to 288 (HVLKKKGYRC…EGTQERRSSE (210 aa)) the chain is Cytoplasmic. Disordered stretches follow at residues 145-172 (FEPESPMSPNAPGSPTSPGSPLSPGAAS) and 237-288 (HKSN…RSSE). A compositionally biased stretch (low complexity) spans 152 to 172 (SPNAPGSPTSPGSPLSPGAAS). The span at 237–246 (HKSNSKERKS) shows a compositional bias: basic and acidic residues.

This sequence belongs to the RELT family.

The protein localises to the cell membrane. This chain is RELT-like protein 1 (RELL1), found in Gallus gallus (Chicken).